The chain runs to 356 residues: tRNA-specific 2-thiouridylase MnmA (356 aa).

Residues 6 to 13 (AMSGGVDS) and Leu-32 contribute to the ATP site. Cys-101 acts as the Nucleophile in catalysis. A disulfide bond links Cys-101 and Cys-193. ATP is bound at residue Gly-125. Residues 143–145 (KDQ) are interaction with tRNA. The active-site Cysteine persulfide intermediate is Cys-193.

This sequence belongs to the MnmA/TRMU family.

It is found in the cytoplasm. It carries out the reaction S-sulfanyl-L-cysteinyl-[protein] + uridine(34) in tRNA + AH2 + ATP = 2-thiouridine(34) in tRNA + L-cysteinyl-[protein] + A + AMP + diphosphate + H(+). Functionally, catalyzes the 2-thiolation of uridine at the wobble position (U34) of tRNA, leading to the formation of s(2)U34. In Mycobacteroides abscessus (strain ATCC 19977 / DSM 44196 / CCUG 20993 / CIP 104536 / JCM 13569 / NCTC 13031 / TMC 1543 / L948) (Mycobacterium abscessus), this protein is tRNA-specific 2-thiouridylase MnmA.